Consider the following 78-residue polypeptide: UPF0349 protein SAHV_0934 (78 aa).

It belongs to the UPF0349 family.

This is UPF0349 protein SAHV_0934 from Staphylococcus aureus (strain Mu3 / ATCC 700698).